We begin with the raw amino-acid sequence, 370 residues long: Maturase K (370 aa).

Belongs to the intron maturase 2 family. MatK subfamily.

It localises to the plastid. The protein resides in the chloroplast. In terms of biological role, usually encoded in the trnK tRNA gene intron. Probably assists in splicing its own and other chloroplast group II introns. The protein is Maturase K of Marchantia polymorpha (Common liverwort).